The following is a 613-amino-acid chain: Kelch-like protein 36 (613 aa).

Residues 45-112 (CDVVLVVEEQ…LYSSELELDG (68 aa)) form the BTB domain. One can recognise a BACK domain in the interval 147 to 249 (YLYLQELASI…PEDILLQRVK (103 aa)). Kelch repeat units follow at residues 294 to 343 (CLLF…VLGG), 344 to 395 (FIFV…SIED), 396 to 442 (MLVA…IYKD), 444 to 491 (VYIS…SLGD), 492 to 544 (SIYS…VWQG), and 545 to 593 (RIYI…VCAL).

In terms of assembly, interacts with CUL3.

It participates in protein modification; protein ubiquitination. Its function is as follows. Probable substrate-specific adapter of an E3 ubiquitin-protein ligase complex which mediates the ubiquitination and subsequent proteasomal degradation of target proteins. The protein is Kelch-like protein 36 (Klhl36) of Rattus norvegicus (Rat).